A 232-amino-acid chain; its full sequence is Glutathione S-transferase E14 (232 aa).

A GST N-terminal domain is found at 4 to 85; sequence PKPILYYDER…HLAEKFDEGG (82 aa). One can recognise a GST C-terminal domain in the interval 91 to 218; the sequence is EHAERMKVLN…RQTMESVGSF (128 aa).

It belongs to the GST superfamily. Epsilon family. In terms of tissue distribution, expressed in the adult ovary (at protein level).

The catalysed reaction is RX + glutathione = an S-substituted glutathione + a halide anion + H(+). Conjugation of reduced glutathione to a wide number of exogenous and endogenous hydrophobic electrophiles. Essential for ecdysteroid biosynthesis. May be involved in detoxification. In Drosophila melanogaster (Fruit fly), this protein is Glutathione S-transferase E14.